A 750-amino-acid chain; its full sequence is Photosystem I P700 chlorophyll a apoprotein A1 (750 aa).

8 helical membrane passes run 70 to 93 (VFSA…FHGA), 156 to 179 (LYCT…FHYH), 195 to 219 (LNHH…HVSL), 291 to 309 (IAHH…GHMY), 346 to 369 (WHAQ…HHMY), 385 to 411 (LSLF…IFMV), 433 to 455 (AIIS…LYIH), and 531 to 549 (FLVH…LILL). Residues C573 and C582 each coordinate [4Fe-4S] cluster. 2 helical membrane-spanning segments follow: residues 589–610 (HVFL…HFSW) and 664–686 (LSAY…MFLF). H675 serves as a coordination point for chlorophyll a'. Residues M683 and Y691 each coordinate chlorophyll a. Residue W692 participates in phylloquinone binding. The helical transmembrane segment at 724–744 (AVGVTHYLLGGIATTWAFFLA) threads the bilayer.

The protein belongs to the PsaA/PsaB family. The PsaA/B heterodimer binds the P700 chlorophyll special pair and subsequent electron acceptors. PSI consists of a core antenna complex that captures photons, and an electron transfer chain that converts photonic excitation into a charge separation. The eukaryotic PSI reaction center is composed of at least 11 subunits. It depends on P700 is a chlorophyll a/chlorophyll a' dimer, A0 is one or more chlorophyll a, A1 is one or both phylloquinones and FX is a shared 4Fe-4S iron-sulfur center. as a cofactor.

Its subcellular location is the plastid. The protein localises to the chloroplast thylakoid membrane. The enzyme catalyses reduced [plastocyanin] + hnu + oxidized [2Fe-2S]-[ferredoxin] = oxidized [plastocyanin] + reduced [2Fe-2S]-[ferredoxin]. PsaA and PsaB bind P700, the primary electron donor of photosystem I (PSI), as well as the electron acceptors A0, A1 and FX. PSI is a plastocyanin-ferredoxin oxidoreductase, converting photonic excitation into a charge separation, which transfers an electron from the donor P700 chlorophyll pair to the spectroscopically characterized acceptors A0, A1, FX, FA and FB in turn. Oxidized P700 is reduced on the lumenal side of the thylakoid membrane by plastocyanin. This Phalaenopsis aphrodite subsp. formosana (Moth orchid) protein is Photosystem I P700 chlorophyll a apoprotein A1.